A 560-amino-acid chain; its full sequence is Dihydroxy-acid dehydratase (560 aa).

Residue Cys-52 coordinates [2Fe-2S] cluster. A Mg(2+)-binding site is contributed by Asp-84. Cys-125 is a binding site for [2Fe-2S] cluster. Asp-126 and Lys-127 together coordinate Mg(2+). The residue at position 127 (Lys-127) is an N6-carboxylysine. Position 197 (Cys-197) interacts with [2Fe-2S] cluster. Residue Glu-449 coordinates Mg(2+). Ser-475 serves as the catalytic Proton acceptor.

It belongs to the IlvD/Edd family. In terms of assembly, homodimer. [2Fe-2S] cluster is required as a cofactor. Mg(2+) serves as cofactor.

The catalysed reaction is (2R)-2,3-dihydroxy-3-methylbutanoate = 3-methyl-2-oxobutanoate + H2O. It catalyses the reaction (2R,3R)-2,3-dihydroxy-3-methylpentanoate = (S)-3-methyl-2-oxopentanoate + H2O. It participates in amino-acid biosynthesis; L-isoleucine biosynthesis; L-isoleucine from 2-oxobutanoate: step 3/4. The protein operates within amino-acid biosynthesis; L-valine biosynthesis; L-valine from pyruvate: step 3/4. In terms of biological role, functions in the biosynthesis of branched-chain amino acids. Catalyzes the dehydration of (2R,3R)-2,3-dihydroxy-3-methylpentanoate (2,3-dihydroxy-3-methylvalerate) into 2-oxo-3-methylpentanoate (2-oxo-3-methylvalerate) and of (2R)-2,3-dihydroxy-3-methylbutanoate (2,3-dihydroxyisovalerate) into 2-oxo-3-methylbutanoate (2-oxoisovalerate), the penultimate precursor to L-isoleucine and L-valine, respectively. This Sulfurisphaera tokodaii (strain DSM 16993 / JCM 10545 / NBRC 100140 / 7) (Sulfolobus tokodaii) protein is Dihydroxy-acid dehydratase.